Consider the following 412-residue polypeptide: Imidazolonepropionase (412 aa).

Residues histidine 76 and histidine 78 each coordinate Fe(3+). The Zn(2+) site is built by histidine 76 and histidine 78. Arginine 85, tyrosine 148, and histidine 181 together coordinate 4-imidazolone-5-propanoate. Tyrosine 148 provides a ligand contact to N-formimidoyl-L-glutamate. Histidine 242 is a binding site for Fe(3+). Histidine 242 provides a ligand contact to Zn(2+). Glutamate 245 contributes to the 4-imidazolone-5-propanoate binding site. Residue aspartate 317 coordinates Fe(3+). Residue aspartate 317 participates in Zn(2+) binding. Positions 319 and 321 each coordinate N-formimidoyl-L-glutamate. Serine 322 provides a ligand contact to 4-imidazolone-5-propanoate.

The protein belongs to the metallo-dependent hydrolases superfamily. HutI family. It depends on Zn(2+) as a cofactor. Requires Fe(3+) as cofactor.

It is found in the cytoplasm. It catalyses the reaction 4-imidazolone-5-propanoate + H2O = N-formimidoyl-L-glutamate. The protein operates within amino-acid degradation; L-histidine degradation into L-glutamate; N-formimidoyl-L-glutamate from L-histidine: step 3/3. Functionally, catalyzes the hydrolytic cleavage of the carbon-nitrogen bond in imidazolone-5-propanoate to yield N-formimidoyl-L-glutamate. It is the third step in the universal histidine degradation pathway. This Staphylococcus aureus (strain MRSA252) protein is Imidazolonepropionase.